The following is a 194-amino-acid chain: UPF0215 protein PF2042 (194 aa).

It belongs to the UPF0215 family.

This chain is UPF0215 protein PF2042, found in Pyrococcus furiosus (strain ATCC 43587 / DSM 3638 / JCM 8422 / Vc1).